A 519-amino-acid polypeptide reads, in one-letter code: Cytochrome P450 88A1 (519 aa).

Residues 1 to 21 (MLGVGMAAAVLLGAVALLLAD) traverse the membrane as a helical segment. C466 contributes to the heme binding site.

Belongs to the cytochrome P450 family. Requires heme as cofactor. Expressed in roots, developing leaves, the vegetative meristem, and suspension culture cells.

It localises to the membrane. Its pathway is plant hormone biosynthesis; gibberellin biosynthesis. The polypeptide is Cytochrome P450 88A1 (CYP88A1) (Zea mays (Maize)).